A 191-amino-acid chain; its full sequence is Gamma-glutamylaminecyclotransferase B (191 aa).

Residue 7–10 (YGTL) coordinates substrate. E82 (proton acceptor) is an active-site residue. The segment covering 155-178 (SADFSQNSEQEIKKNNSLQILTST) has biased composition (polar residues). Positions 155–191 (SADFSQNSEQEIKKNNSLQILTSTGDDHDVNFRGPLQ) are disordered.

The protein belongs to the gamma-glutamylcyclotransferase family.

The enzyme catalyses epsilon-(gamma-L-glutamyl)-L-lysine = 5-oxo-L-proline + L-lysine. Its function is as follows. May contribute to degradation of proteins cross-linked by transglutaminases by degrading the cross-link between a lysine and a glutamic acid residue. Catalyzes the formation of 5-oxo-L-proline from L-gamma-glutamyl-L-epsilon-lysine. The protein is Gamma-glutamylaminecyclotransferase B (ggact.2) of Danio rerio (Zebrafish).